The chain runs to 587 residues: 5-aminolevulinate synthase, erythroid-specific, mitochondrial (587 aa).

Residues 1-49 (MVAAAMLLRSCPVLSQGPTGLLGKVAKTYQFLFSIGRCPILATQGPTCS) constitute a mitochondrion transit peptide. Arginine 163 contacts succinyl-CoA. Pyridoxal 5'-phosphate contacts are provided by cysteine 258 and phenylalanine 259. The succinyl-CoA site is built by serine 280 and lysine 299. Positions 332, 360, and 388 each coordinate pyridoxal 5'-phosphate. The active site involves lysine 391. Position 391 is an N6-(pyridoxal phosphate)lysine (lysine 391). 2 residues coordinate pyridoxal 5'-phosphate: threonine 420 and threonine 421. Position 508 (threonine 508) interacts with succinyl-CoA.

The protein belongs to the class-II pyridoxal-phosphate-dependent aminotransferase family. In terms of assembly, homodimer. Interacts with SUCLA2. Pyridoxal 5'-phosphate is required as a cofactor. Predomnantly expressed in erythroid cells.

The protein resides in the mitochondrion inner membrane. Its subcellular location is the mitochondrion. It catalyses the reaction succinyl-CoA + glycine + H(+) = 5-aminolevulinate + CO2 + CoA. Its pathway is porphyrin-containing compound metabolism; protoporphyrin-IX biosynthesis; 5-aminolevulinate from glycine: step 1/1. Its function is as follows. Catalyzes the pyridoxal 5'-phosphate (PLP)-dependent condensation of succinyl-CoA and glycine to form aminolevulinic acid (ALA), with CoA and CO2 as by-products. Contributes significantly to heme formation during erythropoiesis. The sequence is that of 5-aminolevulinate synthase, erythroid-specific, mitochondrial (Alas2) from Mus musculus (Mouse).